Reading from the N-terminus, the 505-residue chain is Betaine aldehyde dehydrogenase (505 aa).

An NAD(+)-binding site is contributed by 239–244; it reads GSTATG. The Proton acceptor role is filled by Glu261. Residue Cys296 is the Nucleophile of the active site. The short motif at 503–505 is the Microbody targeting signal element; the sequence is SKL.

It belongs to the aldehyde dehydrogenase family. Homodimer.

It localises to the peroxisome. It carries out the reaction betaine aldehyde + NAD(+) + H2O = glycine betaine + NADH + 2 H(+). It functions in the pathway amine and polyamine biosynthesis; betaine biosynthesis via choline pathway; betaine from betaine aldehyde: step 1/1. This chain is Betaine aldehyde dehydrogenase, found in Hordeum vulgare (Barley).